The following is a 234-amino-acid chain: Opacity protein opA65 (234 aa).

Alanine 1 is a signal peptide. A disordered region spans residues 154-179; the sequence is TVTPKPKNGTQGGPVKSTSPIPAYHE.

The protein belongs to the opacity porin family.

The protein localises to the cell outer membrane. Its function is as follows. Implicated in a number of adherence functions. OPA proteins are implicated in pathogenesis and are subject to phase variation. This is Opacity protein opA65 from Neisseria gonorrhoeae.